Consider the following 647-residue polypeptide: DNA topoisomerase 3 (647 aa).

Positions 2–135 (TRLFIAEKPS…KKETVQRLLI (134 aa)) constitute a Toprim domain. The Mg(2+) site is built by glutamate 8, aspartate 104, and aspartate 106. Positions 156-608 (FIPLSVSALA…TLQGRLEQLI (453 aa)) constitute a Topo IA-type catalytic domain. The segment at 195–200 (SVGRVQ) is interaction with DNA. Residue tyrosine 332 is the O-(5'-phospho-DNA)-tyrosine intermediate of the active site.

It belongs to the type IA topoisomerase family. The cofactor is Mg(2+).

It catalyses the reaction ATP-independent breakage of single-stranded DNA, followed by passage and rejoining.. In terms of biological role, releases the supercoiling and torsional tension of DNA, which is introduced during the DNA replication and transcription, by transiently cleaving and rejoining one strand of the DNA duplex. Introduces a single-strand break via transesterification at a target site in duplex DNA. The scissile phosphodiester is attacked by the catalytic tyrosine of the enzyme, resulting in the formation of a DNA-(5'-phosphotyrosyl)-enzyme intermediate and the expulsion of a 3'-OH DNA strand. The free DNA strand then undergoes passage around the unbroken strand, thus removing DNA supercoils. Finally, in the religation step, the DNA 3'-OH attacks the covalent intermediate to expel the active-site tyrosine and restore the DNA phosphodiester backbone. The sequence is that of DNA topoisomerase 3 from Vibrio cholerae serotype O1 (strain ATCC 39315 / El Tor Inaba N16961).